A 431-amino-acid polypeptide reads, in one-letter code: Putative transcription factor R429 (431 aa).

Residues 28–95 (NKFENMSKAL…SIENCSESLD (68 aa)) are a coiled coil. A disordered region spans residues 142 to 187 (SQQENSSESNNDIVKNGTGGSTSKRKKIQPSNRCSGSKTGKVTETK). The span at 143–152 (QQENSSESNN) shows a compositional bias: low complexity. The segment covering 170-181 (QPSNRCSGSKTG) has biased composition (polar residues). A zinc finger spans residues 218 to 241 (CSVPDCDGEKILNQNDGYMVCKKC).

The protein belongs to the nucleo-cytoplasmic large DNA viruses (NCLDVs) VLTF-3 family.

In terms of biological role, putative transcription factor. The protein is Putative transcription factor R429 of Acanthamoeba polyphaga (Amoeba).